The sequence spans 1166 residues: ATP-dependent helicase/deoxyribonuclease subunit B (1166 aa).

One can recognise a UvrD-like helicase ATP-binding domain in the interval 1–285 (MGAVFLSGRS…VRLEETKRHR (285 aa)). 8-15 (GRSGSGKT) serves as a coordination point for ATP. The UvrD-like helicase C-terminal domain occupies 279-586 (EETKRHRHHP…KFALIPPALD (308 aa)). C801, C1121, C1124, and C1130 together coordinate [4Fe-4S] cluster.

It belongs to the helicase family. AddB/RexB type 1 subfamily. As to quaternary structure, heterodimer of AddA and AddB. The cofactor is Mg(2+). [4Fe-4S] cluster is required as a cofactor.

The heterodimer acts as both an ATP-dependent DNA helicase and an ATP-dependent, dual-direction single-stranded exonuclease. Recognizes the chi site generating a DNA molecule suitable for the initiation of homologous recombination. The AddB subunit has 5' -&gt; 3' nuclease activity but not helicase activity. In Bacillus licheniformis (strain ATCC 14580 / DSM 13 / JCM 2505 / CCUG 7422 / NBRC 12200 / NCIMB 9375 / NCTC 10341 / NRRL NRS-1264 / Gibson 46), this protein is ATP-dependent helicase/deoxyribonuclease subunit B.